A 360-amino-acid chain; its full sequence is Peptide chain release factor 1 (360 aa).

At Q235 the chain carries N5-methylglutamine. Residues 285 to 313 (KRQQAEASTRRNLLGSGDRSDRNRTYNFP) are disordered.

The protein belongs to the prokaryotic/mitochondrial release factor family. Methylated by PrmC. Methylation increases the termination efficiency of RF1.

It localises to the cytoplasm. Peptide chain release factor 1 directs the termination of translation in response to the peptide chain termination codons UAG and UAA. The chain is Peptide chain release factor 1 from Shigella boydii serotype 18 (strain CDC 3083-94 / BS512).